The chain runs to 1706 residues: Probable ATP-dependent RNA helicase DDX60-like (1706 aa).

The segment at arginine 545 to glutamine 580 is disordered. Over residues serine 551–histidine 564 the composition is skewed to polar residues. Basic residues predominate over residues glutamine 565–serine 574. Residues leucine 752–lysine 919 form the Helicase ATP-binding domain. Alanine 765–threonine 772 serves as a coordination point for ATP. The DEAH box motif lies at aspartate 869–histidine 872. The Helicase C-terminal domain occupies aspartate 1205 to leucine 1354.

It belongs to the helicase family.

The enzyme catalyses ATP + H2O = ADP + phosphate + H(+). The sequence is that of Probable ATP-dependent RNA helicase DDX60-like from Homo sapiens (Human).